Consider the following 846-residue polypeptide: Vinculin (846 aa).

Residues 1 to 257 (MPVKFHTKTL…VLQLTTTFEE (257 aa)) form an interaction with TLN region. A coiled-coil region spans residues 315 to 370 (RAKLLAAADELDQILKELEELQAKGLGDSRQARALAHAAAVKLQELEQEIRKALAE). The segment at 617 to 646 (WVPPRPPLPELEEEEEPPELPPPPEDPASL) is disordered.

Belongs to the vinculin/alpha-catenin family. As to quaternary structure, monomer. Interacts with TLN (talin); the interaction facilitates VIN1 binding to F-actin. Expressed in epithelial tissues, specifically the pinacoderm (outer epithelium) and choanoderm (feeding epithelium) (at protein level). Also detected in migratory cells of the mesohyl (at protein level).

It is found in the cytoplasm. Its subcellular location is the cell cortex. The protein localises to the cell projection. It localises to the filopodium. The protein resides in the cytoskeleton. Its function is as follows. Actin filament (F-actin)-binding protein which may play a role in cell-cell adhesion. This Oscarella pearsei (Sponge) protein is Vinculin.